Here is a 153-residue protein sequence, read N- to C-terminus: 6,7-dimethyl-8-ribityllumazine synthase 1 (153 aa).

5-amino-6-(D-ribitylamino)uracil-binding positions include phenylalanine 16, 50–52, and 74–76; these read AYE and CVI. 79 to 80 serves as a coordination point for (2S)-2-hydroxy-3-oxobutyl phosphate; sequence ET. The Proton donor role is filled by histidine 82. Phenylalanine 107 contributes to the 5-amino-6-(D-ribitylamino)uracil binding site. Residue arginine 121 participates in (2S)-2-hydroxy-3-oxobutyl phosphate binding.

The protein belongs to the DMRL synthase family.

The enzyme catalyses (2S)-2-hydroxy-3-oxobutyl phosphate + 5-amino-6-(D-ribitylamino)uracil = 6,7-dimethyl-8-(1-D-ribityl)lumazine + phosphate + 2 H2O + H(+). Its pathway is cofactor biosynthesis; riboflavin biosynthesis; riboflavin from 2-hydroxy-3-oxobutyl phosphate and 5-amino-6-(D-ribitylamino)uracil: step 1/2. Functionally, catalyzes the formation of 6,7-dimethyl-8-ribityllumazine by condensation of 5-amino-6-(D-ribitylamino)uracil with 3,4-dihydroxy-2-butanone 4-phosphate. This is the penultimate step in the biosynthesis of riboflavin. This Caulobacter vibrioides (strain ATCC 19089 / CIP 103742 / CB 15) (Caulobacter crescentus) protein is 6,7-dimethyl-8-ribityllumazine synthase 1.